The sequence spans 214 residues: Variable small protein 1 (214 aa).

Positions 1–18 are cleaved as a signal peptide; it reads MRKRISAIIMTLFMVFMS. A lipid anchor (N-palmitoyl cysteine) is attached at Cys-19. Residue Cys-19 is the site of S-diacylglycerol cysteine attachment.

The protein belongs to the variable small protein (Vsp) family.

It is found in the cell outer membrane. Functionally, the Vlp and Vsp proteins are antigenically distinct proteins, only one vlp or vsp gene is transcriptionally active at any one time. Switching between these genes is a mechanism of host immune response evasion. The sequence is that of Variable small protein 1 from Borrelia hermsii.